A 248-amino-acid polypeptide reads, in one-letter code: Leucyl/phenylalanyl-tRNA--protein transferase (248 aa).

This sequence belongs to the L/F-transferase family.

The protein resides in the cytoplasm. It carries out the reaction N-terminal L-lysyl-[protein] + L-leucyl-tRNA(Leu) = N-terminal L-leucyl-L-lysyl-[protein] + tRNA(Leu) + H(+). It catalyses the reaction N-terminal L-arginyl-[protein] + L-leucyl-tRNA(Leu) = N-terminal L-leucyl-L-arginyl-[protein] + tRNA(Leu) + H(+). The enzyme catalyses L-phenylalanyl-tRNA(Phe) + an N-terminal L-alpha-aminoacyl-[protein] = an N-terminal L-phenylalanyl-L-alpha-aminoacyl-[protein] + tRNA(Phe). In terms of biological role, functions in the N-end rule pathway of protein degradation where it conjugates Leu, Phe and, less efficiently, Met from aminoacyl-tRNAs to the N-termini of proteins containing an N-terminal arginine or lysine. The polypeptide is Leucyl/phenylalanyl-tRNA--protein transferase (Rhizorhabdus wittichii (strain DSM 6014 / CCUG 31198 / JCM 15750 / NBRC 105917 / EY 4224 / RW1) (Sphingomonas wittichii)).